Here is an 883-residue protein sequence, read N- to C-terminus: Receptor-like protein 40 (883 aa).

An N-terminal signal peptide occupies residues 1–21 (MSELLFSLNFLLLLLLSCVSP). Residues 22–846 (SSFFTFNNPV…EDEQVLNWKA (825 aa)) are Extracellular-facing. Residues Asn58, Asn91, and Asn109 are each glycosylated (N-linked (GlcNAc...) asparagine). 2 LRR repeats span residues 97–121 (FHHLRSLLLPHNNFTSSSISSKFGM) and 122–143 (LNNLEVLSLSSSGFLAQVPFSF). Asn145 carries an N-linked (GlcNAc...) asparagine glycan. LRR repeat units lie at residues 146–169 (LSMLSALVLSNNDLTGSLSFARNL), 170–195 (RKLRVLDVSYNHFSGILNPNSSLFEL), 197–219 (HIIYLNLRYNNFTSSSLPYEFGN), 220–244 (LNKLEVLDVSSNSFFGQVPPTISNL), 246–267 (QLTELYLPLNHFTGSLPLVQNL), 268–291 (TKLSILHLFGNHFSGTIPSSLFTM), 293–316 (FLSYLSLKGNNLNGSIEVPNSSSS), 317–340 (SRLESLHLGENHFEGKILEPISKL), 342–364 (NLKELDLSFLNTSYPIDLSLFSS), 365–390 (LKSLLLLDLSGDWISKASLTLDSYIP), 391–412 (STLEVLRLEHCDISDFPNVFKT), 413–437 (LHNLEYIALSNNRISGKFPEWLWSL), 439–462 (RLSSVFITDNLLTGFEGSSEVLVN), and 463–486 (SSVQILSLDTNSLEGALPHLPLSI). N-linked (GlcNAc...) asparagine glycosylation is found at Asn189, Asn207, Asn243, and Asn266. Residues Asn305 and Asn312 are each glycosylated (N-linked (GlcNAc...) asparagine). N-linked (GlcNAc...) asparagine glycosylation is present at Asn352. N-linked (GlcNAc...) asparagine glycosylation is present at Asn462. The stretch at 487–506 (NYFSAIDNRFGGDIPLSICN) is one LRR 17; degenerate repeat. Residues Asn506 and Asn519 are each glycosylated (N-linked (GlcNAc...) asparagine). LRR repeat units follow at residues 507-528 (RSSLDVLDLSYNNFTGPIPPCL), 529-552 (SNLLYLKLRKNNLEGSIPDKYYED), 554-576 (PLRSLDVGYNRLTGKLPRSLINC), 578-600 (ALQFLSVDHNGIKDTFPFSLKAL), 601-624 (PKLQVLLLSSNKFYGPLSPPNEGP), 627-651 (FPELRILEIAGNKLTGSLSSDFFVN), 701-724 (TSSATIDFSGNRLEGEIPESIGLL), 725-747 (KALIALNLSNNAFTGHIPLSFAN), 748-772 (LKKMESLDLSSNQLSGTIPNGLRTL), and 774-797 (FLAYVNVSHNQLIGEIPQGTQITG). The N-linked (GlcNAc...) asparagine glycan is linked to Asn575. Asn731 is a glycosylation site (N-linked (GlcNAc...) asparagine). Asn779 carries an N-linked (GlcNAc...) asparagine glycan. The chain crosses the membrane as a helical span at residues 847–867 (VAIGYGIGVLLGLAIAQLISL). The Cytoplasmic segment spans residues 868 to 883 (YKPKWLASLVIKSRNC).

It belongs to the RLP family.

The protein resides in the cell membrane. The protein is Receptor-like protein 40 of Arabidopsis thaliana (Mouse-ear cress).